Reading from the N-terminus, the 411-residue chain is Tyrosine--tRNA ligase (411 aa).

Tyr34 contributes to the L-tyrosine binding site. The 'HIGH' region motif lies at Cys39–Ser48. Positions 171 and 175 each coordinate L-tyrosine. Residues Lys231–Thr235 carry the 'KMSKS' region motif. Lys234 serves as a coordination point for ATP. The region spanning Ile345–Val411 is the S4 RNA-binding domain.

It belongs to the class-I aminoacyl-tRNA synthetase family. TyrS type 1 subfamily. Homodimer.

Its subcellular location is the cytoplasm. The enzyme catalyses tRNA(Tyr) + L-tyrosine + ATP = L-tyrosyl-tRNA(Tyr) + AMP + diphosphate + H(+). Functionally, catalyzes the attachment of tyrosine to tRNA(Tyr) in a two-step reaction: tyrosine is first activated by ATP to form Tyr-AMP and then transferred to the acceptor end of tRNA(Tyr). The polypeptide is Tyrosine--tRNA ligase (Rickettsia rickettsii (strain Sheila Smith)).